Reading from the N-terminus, the 459-residue chain is N,N-dimethyl phenylurea N-demethylase subunit alpha (459 aa).

In terms of domain architecture, Rieske spans 55–166 (WVFVAHETEI…VESYHGFIFT (112 aa)). Positions 97, 99, 117, and 120 each coordinate [2Fe-2S] cluster. Residues His-225, His-230, and Asp-386 each coordinate Fe cation.

Belongs to the bacterial ring-hydroxylating dioxygenase alpha subunit family. As to quaternary structure, pdmA (subunit alpha) and PdmB (subunit beta) form the oxygenase component of a bacterial Rieske non-heme iron oxygenase (RO) system. [2Fe-2S] cluster serves as cofactor. Fe cation is required as a cofactor.

It catalyses the reaction a 1,1-dimethyl-3-phenylurea + 2 reduced [2Fe-2S]-[ferredoxin] + O2 + 2 H(+) = a 1-methyl-3-phenylurea + formaldehyde + 2 oxidized [2Fe-2S]-[ferredoxin] + H2O. The catalysed reaction is isoproturon + 2 reduced [2Fe-2S]-[ferredoxin] + O2 + 2 H(+) = 1-methyl-3-[4-(propan-2-yl)phenyl]urea + formaldehyde + 2 oxidized [2Fe-2S]-[ferredoxin] + H2O. It carries out the reaction chlorotoluron + 2 reduced [2Fe-2S]-[ferredoxin] + O2 + 2 H(+) = 3-(3-chloro-4-methylphenyl)-1-methylurea + formaldehyde + 2 oxidized [2Fe-2S]-[ferredoxin] + H2O. The enzyme catalyses metoxuron + 2 reduced [2Fe-2S]-[ferredoxin] + O2 + 2 H(+) = 3-(3-chloro-4-methoxylphenyl)-1-methylurea + formaldehyde + 2 oxidized [2Fe-2S]-[ferredoxin] + H2O. It catalyses the reaction monuron + 2 reduced [2Fe-2S]-[ferredoxin] + O2 + 2 H(+) = 3-(4-chlorophenyl)-1-methylurea + formaldehyde + 2 oxidized [2Fe-2S]-[ferredoxin] + H2O. The catalysed reaction is diuron + 2 reduced [2Fe-2S]-[ferredoxin] + O2 + 2 H(+) = 3-(3,4-dichlorophenyl)-1-methylurea + formaldehyde + 2 oxidized [2Fe-2S]-[ferredoxin] + H2O. It carries out the reaction fluometuron + 2 reduced [2Fe-2S]-[ferredoxin] + O2 + 2 H(+) = 3-[3-(trifluoromethyl)phenyl]-1-methylurea + formaldehyde + 2 oxidized [2Fe-2S]-[ferredoxin] + H2O. The enzyme catalyses fenuron + 2 reduced [2Fe-2S]-[ferredoxin] + O2 + 2 H(+) = 1-methyl-3-phenylurea + formaldehyde + 2 oxidized [2Fe-2S]-[ferredoxin] + H2O. Its pathway is xenobiotic degradation. Its activity is regulated as follows. Activity is stimulated in vitro by coexpression of a [3Fe-4S]-type ferredoxin. Part of the multicomponent N,N-dimethyl phenylurea N-demethylase responsible for the initial N-demethylation step during the bacterial metabolism of N,N-dimethyl-substituted phenylurea herbicides. Catalyzes the mono-N-demethylation of N,N-dimethyl-substituted phenylurea herbicides to their mono-N-demethylated derivatives. Is active on isoproturon (IPU), chlorotoluron, metoxuron, monoron, diuron, fluometuron and fenuron, but cannot transform the N-methoxy-N-methyl-substituted herbicides. The sequence is that of N,N-dimethyl phenylurea N-demethylase subunit alpha from Sphingobium sp. (strain YBL2).